Here is a 307-residue protein sequence, read N- to C-terminus: MLTANTPLLARLAENHTQMLMAHNQLTEAHTMLISQLVVQFEHDPHEPTEANKPKPFAQDVKPQPVAPSVIVEPKVVIEPAPVVEAHTKADDKPAPVVAEKKGKVAKAETKPAKAVKPMVEDPKVAPEPEPVDIESLDLRHVVSLSVLFGDKAVKPDHTQVAKAKATFAAEKADGVTGQIDALYCALNGISNIKTLSKTSTFDLCLKMLANWDNLFGITERREFALSLLHELPTPTEVKPIDFNALRSEASARITQLVKGGYRNEALDILASFNAKKLGDVTDDNLARFIEKAQSVLSDDKSEGSDG.

Basic and acidic residues predominate over residues 44-53 (DPHEPTEANK). Disordered regions lie at residues 44 to 64 (DPHE…VKPQ) and 109 to 129 (ETKP…APEP).

This Escherichia coli (Bacteriophage APSE-1) protein is Putative protein p53 (53).